The following is a 243-amino-acid chain: Probable aquaporin SIP1-2 (243 aa).

A run of 2 helical transmembrane segments spans residues Val-12–Val-32 and Trp-42–Ile-62. An NPA 1 motif is present at residues Asn-72–Cys-74. The next 3 membrane-spanning stretches (helical) occupy residues Phe-90–Ile-110, Gly-135–Leu-155, and Leu-162–Phe-182. The NPA 2 motif lies at Asn-188 to Ala-190. Residues Val-210–Phe-230 traverse the membrane as a helical segment.

Belongs to the MIP/aquaporin (TC 1.A.8) family. SIP (TC 1.A.8.10) subfamily. In terms of tissue distribution, expressed in roots and above ground. Expressed in elongating regions of the root tips, cotyledons, minor veins and hydathode cells of the rosette leaves. Weakly expressed in vascular tissues of the flower petals, filaments of stamens, upper part of the styles and receptacles of the siliques.

The protein resides in the endoplasmic reticulum membrane. Its function is as follows. Water channel required to facilitate the transport of water across cell membrane. This Arabidopsis thaliana (Mouse-ear cress) protein is Probable aquaporin SIP1-2 (SIP1-2).